A 592-amino-acid chain; its full sequence is Aspartate--tRNA ligase (592 aa).

Residue Glu173 coordinates L-aspartate. The tract at residues 197–200 (QLFK) is aspartate. Residue Arg219 participates in L-aspartate binding. Residues 219 to 221 (RDE) and Gln228 each bind ATP. Residue His448 coordinates L-aspartate. Glu482 serves as a coordination point for ATP. Arg489 is a binding site for L-aspartate. ATP is bound at residue 534–537 (GLDR).

This sequence belongs to the class-II aminoacyl-tRNA synthetase family. Type 1 subfamily. Homodimer.

The protein resides in the cytoplasm. The catalysed reaction is tRNA(Asp) + L-aspartate + ATP = L-aspartyl-tRNA(Asp) + AMP + diphosphate. In terms of biological role, catalyzes the attachment of L-aspartate to tRNA(Asp) in a two-step reaction: L-aspartate is first activated by ATP to form Asp-AMP and then transferred to the acceptor end of tRNA(Asp). This chain is Aspartate--tRNA ligase, found in Shewanella baltica (strain OS195).